A 433-amino-acid polypeptide reads, in one-letter code: Trigger factor (433 aa).

In terms of domain architecture, PPIase FKBP-type spans 163-248 (GDFVTFDFKG…IKEIKVKELP (86 aa)).

It belongs to the FKBP-type PPIase family. Tig subfamily.

It localises to the cytoplasm. It carries out the reaction [protein]-peptidylproline (omega=180) = [protein]-peptidylproline (omega=0). Functionally, involved in protein export. Acts as a chaperone by maintaining the newly synthesized protein in an open conformation. Functions as a peptidyl-prolyl cis-trans isomerase. This chain is Trigger factor, found in Geotalea uraniireducens (strain Rf4) (Geobacter uraniireducens).